The sequence spans 67 residues: Small ribosomal subunit protein bS21 (67 aa).

Positions 37–52 are enriched in basic and acidic residues; the sequence is EKPSERKAREAAEAVR. Residues 37–67 are disordered; it reads EKPSERKAREAAEAVRRARKMERKRLEREGF.

Belongs to the bacterial ribosomal protein bS21 family.

In Gluconacetobacter diazotrophicus (strain ATCC 49037 / DSM 5601 / CCUG 37298 / CIP 103539 / LMG 7603 / PAl5), this protein is Small ribosomal subunit protein bS21.